Here is a 337-residue protein sequence, read N- to C-terminus: Ribosomal RNA small subunit methyltransferase H (337 aa).

S-adenosyl-L-methionine is bound by residues 36–38 (GGH), aspartate 56, phenylalanine 82, aspartate 100, and glutamine 107. Positions 315–337 (LEERSKRIPNPQSPIPASQGDAQ) are disordered.

This sequence belongs to the methyltransferase superfamily. RsmH family.

The protein resides in the cytoplasm. It carries out the reaction cytidine(1402) in 16S rRNA + S-adenosyl-L-methionine = N(4)-methylcytidine(1402) in 16S rRNA + S-adenosyl-L-homocysteine + H(+). In terms of biological role, specifically methylates the N4 position of cytidine in position 1402 (C1402) of 16S rRNA. The chain is Ribosomal RNA small subunit methyltransferase H from Xanthomonas euvesicatoria pv. vesicatoria (strain 85-10) (Xanthomonas campestris pv. vesicatoria).